The following is a 316-amino-acid chain: Transaldolase 2 (316 aa).

The active-site Schiff-base intermediate with substrate is lysine 131.

It belongs to the transaldolase family. Type 1 subfamily. As to quaternary structure, homodimer.

Its subcellular location is the cytoplasm. The catalysed reaction is D-sedoheptulose 7-phosphate + D-glyceraldehyde 3-phosphate = D-erythrose 4-phosphate + beta-D-fructose 6-phosphate. Its pathway is carbohydrate degradation; pentose phosphate pathway; D-glyceraldehyde 3-phosphate and beta-D-fructose 6-phosphate from D-ribose 5-phosphate and D-xylulose 5-phosphate (non-oxidative stage): step 2/3. Its function is as follows. Transaldolase is important for the balance of metabolites in the pentose-phosphate pathway. The protein is Transaldolase 2 of Salmonella choleraesuis (strain SC-B67).